Here is a 556-residue protein sequence, read N- to C-terminus: MRIKKYTKVRLLVNCCLLLFFLIDCGADRQSLYKDLLASLIYISDNKNIGSTNSDLTGSGSVSSSPADAAPENSILANSIPENMGIKILTHNVFLLPKTLPGWGNWGQNERAQRIVSSNYIQNQDVIVFDEAFDTDARKILLDGVRSEYPYQTDVIGRTKKGWDATLGLYRTDAFTNGGVVIVSKWPIEEKIQHVFKEKGCGADVFSNKGFAYVRIDKNGRKFHIIGTHVQAQDSGCANLGVVSRVNQFNEIRDFIDSKKIPKNEMVLIAGDLNVIKGSREYHQMLCILNVNNPKYVGVPFTWDTKTNEIAAFYYKKVEPAYLDYIFVSKSHFQPPIWQNLAYDPISAKTWTAKGYTSDEFSDHYPVYGFIYADSSTPTKSGRKRKYDRVSFVSVATGKKIQANSEKSNAWLKVNATTETDLTKFNLVQTNDPDSNPSCMKSGHVRIESSHSLNYFWNWWLGGGKGNYAYYPKFNDGSNRIQIINLDGGCLQDGSRVAFKDYDTISRRQYFLTVWEGGNWDKYLYLWRSHIGLREIFYLKLDSSPEMNWSKKLIYR.

The signal sequence occupies residues 1-27; that stretch reads MRIKKYTKVRLLVNCCLLLFFLIDCGA.

The protein localises to the secreted. It catalyses the reaction a sphingomyelin + H2O = phosphocholine + an N-acylsphing-4-enine + H(+). In Leptospira interrogans, this protein is Sphingomyelinase C (sph).